The chain runs to 373 residues: tRNA-specific 2-thiouridylase MnmA (373 aa).

ATP contacts are provided by residues 12-19 (GMSGGVDS) and Met38. The interaction with target base in tRNA stretch occupies residues 98–100 (NPD). Cys103 functions as the Nucleophile in the catalytic mechanism. Cys103 and Cys200 form a disulfide bridge. Residue Gly127 participates in ATP binding. Residues 150-152 (KDQ) form an interaction with tRNA region. Cys200 serves as the catalytic Cysteine persulfide intermediate. Positions 312–313 (RY) are interaction with tRNA.

Belongs to the MnmA/TRMU family.

The protein resides in the cytoplasm. It catalyses the reaction S-sulfanyl-L-cysteinyl-[protein] + uridine(34) in tRNA + AH2 + ATP = 2-thiouridine(34) in tRNA + L-cysteinyl-[protein] + A + AMP + diphosphate + H(+). Catalyzes the 2-thiolation of uridine at the wobble position (U34) of tRNA, leading to the formation of s(2)U34. This chain is tRNA-specific 2-thiouridylase MnmA, found in Streptococcus pyogenes serotype M6 (strain ATCC BAA-946 / MGAS10394).